The chain runs to 193 residues: AP-3 complex subunit sigma-1 (193 aa).

Residue serine 191 is modified to Phosphoserine.

It belongs to the adaptor complexes small subunit family. In terms of assembly, adaptor protein complex 3 (AP-3) is a heterotetramer composed of two large adaptins (delta-type subunit AP3D1 and beta-type subunit AP3B1 or AP3B2), a medium adaptin (mu-type subunit AP3M1 or AP3M2) and a small adaptin (sigma-type subunit APS1 or AP3S2). Interacts with AGAP1. AP-3 associates with the BLOC-1 complex.

It is found in the golgi apparatus. The protein resides in the cytoplasmic vesicle membrane. Functionally, part of the AP-3 complex, an adaptor-related complex which is not clathrin-associated. The complex is associated with the Golgi region as well as more peripheral structures. It facilitates the budding of vesicles from the Golgi membrane and may be directly involved in trafficking to lysosomes. In concert with the BLOC-1 complex, AP-3 is required to target cargos into vesicles assembled at cell bodies for delivery into neurites and nerve terminals. The sequence is that of AP-3 complex subunit sigma-1 (AP3S1) from Bos taurus (Bovine).